Here is a 166-residue protein sequence, read N- to C-terminus: MMSGRTDEELKGVTLLGNQSVKYQYQYNPDILESFGNKHPENDYFVKLNFPEFTSLCPKTGQPDFAAIYISYVPDKLLVESKSLKLYLFSFRNQGDFHEDCINIIMKDLIRLMDPKYIEVWGKFTPRGGISIDPYCNHGKKGTKWETMAEKRIQWHDMNPENINNR.

The active-site Thioimide intermediate is cysteine 57. The Proton donor role is filled by aspartate 64. Substrate is bound by residues 79–81 (VES) and 98–99 (HE).

Belongs to the GTP cyclohydrolase I family. QueF type 1 subfamily.

It is found in the cytoplasm. The catalysed reaction is 7-aminomethyl-7-carbaguanine + 2 NADP(+) = 7-cyano-7-deazaguanine + 2 NADPH + 3 H(+). The protein operates within tRNA modification; tRNA-queuosine biosynthesis. In terms of biological role, catalyzes the NADPH-dependent reduction of 7-cyano-7-deazaguanine (preQ0) to 7-aminomethyl-7-deazaguanine (preQ1). The polypeptide is NADPH-dependent 7-cyano-7-deazaguanine reductase (Alkaliphilus metalliredigens (strain QYMF)).